The following is a 116-amino-acid chain: Large ribosomal subunit protein uL18 (116 aa).

It belongs to the universal ribosomal protein uL18 family. Part of the 50S ribosomal subunit; part of the 5S rRNA/L5/L18/L25 subcomplex. Contacts the 5S and 23S rRNAs.

Functionally, this is one of the proteins that bind and probably mediate the attachment of the 5S RNA into the large ribosomal subunit, where it forms part of the central protuberance. The polypeptide is Large ribosomal subunit protein uL18 (Shewanella putrefaciens (strain CN-32 / ATCC BAA-453)).